A 1373-amino-acid chain; its full sequence is TAL effector protein PthXo1 (1373 aa).

Disordered stretches follow at residues 1–68 and 127–152; these read MDPI…SAGS and AARP…PAAQ. The segment covering 131–141 has biased composition (basic residues); it reads PRAKPAPRRRA. The span at 142 to 152 shows a compositional bias: low complexity; that stretch reads AQPSDASPAAQ. The stretch at 221 to 239 is one Cryptic repeat -1 repeat; the sequence is THEDIVGVGKQWSGARALE. Residues 256-273 form a Cryptic repeat 0 repeat; it reads DTGQLVKIAKRGGVTAVE. 23 Core repeat repeats span residues 289–322, 323–356, 357–390, 391–424, 425–458, 459–492, 493–525, 526–559, 560–593, 594–627, 628–661, 662–695, 696–729, 730–763, 764–797, 798–831, 832–865, 866–899, 900–933, 934–967, 968–1001, 1002–1034, and 1035–1068; these read LTPA…QAHG, LPPD…QAHG, LTPD…QAHG, LTPD…QTHG, LTQV…QAHG, LTQE…QAHG, LTPA…QDHG, LTLA…QAHG, LTQD…QDHG, LTPD…QDHG, and LTLD…QDHG. HEAT repeat units follow at residues 714 to 760, 782 to 828, 850 to 893, and 918 to 961; these read LETV…VLCQ and LETV…LLPV. The stretch at 1053 to 1091 is one HEAT 5 repeat; it reads LETVQRLLPVLCQDHGLTPNQVVAIASNGGKQALESIVA. Residues 1069–1087 form a Core repeat 23.5 repeat; that stretch reads LTPNQVVAIASNGGKQALE. Residues 1136 to 1364 form an acidic activation domain region; the sequence is RVNRRIGERT…ELAWLMELLP (229 aa). A Nuclear localization signal NLS1 motif is present at residues 1222–1225; it reads KRAK. The tract at residues 1250–1286 is disordered; the sequence is LDAPSPMHEGDQTGASSRKRSRSDRAVTGPSAQHSFE. A Nuclear localization signal NLS2 motif is present at residues 1268 to 1271; the sequence is KRSR. Residues 1305 to 1308 carry the Nuclear localization signal NLS3 motif; it reads KRPR.

It belongs to the transcription activator-like effector (TALE) family.

The protein resides in the secreted. The protein localises to the host nucleus. Avirulence protein. Acts as a transcription factor in rice, inducing expression of a number of host genes including SWEET11 (Os8N3, XA13, AC Q6YZF3) in susceptible plants with the Xa13 allele. Plants with the xa13 allele, which has an altered promoter, are resistant to bacterial blight caused by this bacterial strain and do not induce SWEET11. The xa13 allele elicits an atypical hypersensitive response (HR). PthXo1 binds SWEET11 promoter DNA in a sequence-specific manner. The sequence is that of TAL effector protein PthXo1 (pthXo1) from Xanthomonas oryzae pv. oryzae (strain PXO99A).